We begin with the raw amino-acid sequence, 271 residues long: MSDDRYCVFGNPVAHSRSPRIHALFAEQCGQAMTYEAIEAPREDFAGAWHAFVAAGGCGANVTVPFKEDAFRLADVLSQRARRAGAVNTLVRGRDGRTYADTTDGVGLVRDLEAHGVTLEGARILILGAGGAVRGVLDPLLAKAPSCLHIANRTASKAVRLAEEASPEGRVTGGGYSELDGAFDVVINGTSASLGGELPPLPDTLLAADGVAYDMMYAAEPTVFLQWAAAHGGRGIDGLGMLIEQAAESFFLWRQVRPDTAPVRETLRREL.

Shikimate is bound by residues 16 to 18 (SRS) and Thr-63. Catalysis depends on Lys-67, which acts as the Proton acceptor. Shikimate-binding residues include Asn-88 and Asp-104. Residues 128–132 (GAGGA), 152–157 (NRTASK), and Met-215 each bind NADP(+). A shikimate-binding site is contributed by Tyr-217. Residue Gly-238 coordinates NADP(+).

Belongs to the shikimate dehydrogenase family. As to quaternary structure, homodimer.

The catalysed reaction is shikimate + NADP(+) = 3-dehydroshikimate + NADPH + H(+). It functions in the pathway metabolic intermediate biosynthesis; chorismate biosynthesis; chorismate from D-erythrose 4-phosphate and phosphoenolpyruvate: step 4/7. Functionally, involved in the biosynthesis of the chorismate, which leads to the biosynthesis of aromatic amino acids. Catalyzes the reversible NADPH linked reduction of 3-dehydroshikimate (DHSA) to yield shikimate (SA). This Chromohalobacter salexigens (strain ATCC BAA-138 / DSM 3043 / CIP 106854 / NCIMB 13768 / 1H11) protein is Shikimate dehydrogenase (NADP(+)).